Reading from the N-terminus, the 116-residue chain is Large ribosomal subunit protein bL19 (116 aa).

It belongs to the bacterial ribosomal protein bL19 family.

Its function is as follows. This protein is located at the 30S-50S ribosomal subunit interface and may play a role in the structure and function of the aminoacyl-tRNA binding site. This chain is Large ribosomal subunit protein bL19, found in Lactobacillus gasseri (strain ATCC 33323 / DSM 20243 / BCRC 14619 / CIP 102991 / JCM 1131 / KCTC 3163 / NCIMB 11718 / NCTC 13722 / AM63).